The sequence spans 297 residues: Juvenile hormone acid O-methyltransferase (297 aa).

This sequence belongs to the methyltransferase superfamily. As to expression, predominantly expressed in corpora allata. Also expressed at low level in testis.

It carries out the reaction (2E,6E)-farnesoate + S-adenosyl-L-methionine = methyl (2E,6E)-farnesoate + S-adenosyl-L-homocysteine. The enzyme catalyses juvenile hormone III carboxylate + S-adenosyl-L-methionine = juvenile hormone III + S-adenosyl-L-homocysteine. Functionally, O-methyltransferase that transfers a methyl group from S-adenosyl-L-methionine (SAM) to the carboxyl group of juvenile hormone acids to produce active juvenile hormones in the corpora allata, the last step during juvenile hormone biosynthesis. Also able to methylate farnesoate to methyl farnesoate. The protein is Juvenile hormone acid O-methyltransferase of Drosophila melanogaster (Fruit fly).